We begin with the raw amino-acid sequence, 217 residues long: Dephospho-CoA kinase (217 aa).

The region spanning 4 to 203 is the DPCK domain; the sequence is IVALTGGISS…SHLSRIYNKN (200 aa). 12–17 lines the ATP pocket; the sequence is SSGKTT.

The protein belongs to the CoaE family.

It localises to the cytoplasm. It catalyses the reaction 3'-dephospho-CoA + ATP = ADP + CoA + H(+). Its pathway is cofactor biosynthesis; coenzyme A biosynthesis; CoA from (R)-pantothenate: step 5/5. Catalyzes the phosphorylation of the 3'-hydroxyl group of dephosphocoenzyme A to form coenzyme A. In Buchnera aphidicola subsp. Acyrthosiphon pisum (strain APS) (Acyrthosiphon pisum symbiotic bacterium), this protein is Dephospho-CoA kinase.